Consider the following 111-residue polypeptide: BET1-like protein (111 aa).

Residues 1–86 are Cytoplasmic-facing; it reads MADWTRAQSS…VARSGRDTRK (86 aa). Residues Ser9 and Ser37 each carry the phosphoserine modification. The 63-residue stretch at 15–77 folds into the t-SNARE coiled-coil homology domain; that stretch reads EIVDRENKRM…TGSVKRFSTV (63 aa). A helical; Anchor for type IV membrane protein membrane pass occupies residues 87–107; it reads LLCGMAVVLIVAFFILSYLFS. Residues 108–111 are Vesicular-facing; sequence RTRT.

Component of a SNARE complex consisting of STX5, YKT6, GOSR1 and BET1L. Interacts with STX5. In terms of tissue distribution, widely expressed. Highest levels in heart, liver, skeletal muscle and kidney.

It is found in the golgi apparatus membrane. The protein resides in the golgi apparatus. The protein localises to the trans-Golgi network membrane. Its function is as follows. Vesicle SNARE required for targeting and fusion of retrograde transport vesicles with the Golgi complex. Required for the integrity of the Golgi complex. This chain is BET1-like protein, found in Rattus norvegicus (Rat).